Here is a 578-residue protein sequence, read N- to C-terminus: MGRRPRGPGSPRGPGPPRPGPGLPPLLLVLALAAHGGCAAPAPRAEDLSLGVEWLSRFGYLPPADPASGQLQTQEELSKAITAMQQFGGLETTGILDEATLALMKTPRCSLPDLPPGAQSRRKRQTPPPTKWSKRNLSWRVRTFPRDSPLGRDTVRALMYYALKVWSDITPLNFHEVAGNAADIQIDFSKADHNDGYPFDGPGGTVAHAFFPGDHHTAGDTHFDDDEPWTFRSSDAHGMDLFAVAVHEFGHAIGLSHVAAPSSIMQPYYQGPVGDPLRYGLPYEDRVRVWQLYGVRESVSPTAQLDTPEPEEPPLLPEPPNNRSSTPPQKDVPHRCTAHFDAVAQIRGEAFFFKGKYFWRLTRDRHLVSLQPAQMHRFWRGLPLHLDSVDAVYERTSDHKIVFFKGDRYWVFKDNNVEEGYPRPVSDFSLPPGGIDAVFSWAHNDRTYFFKDQLYWRYDDHTRRMDPGYPAQGPLWRGVPSMLDDAMRWSDGASYFFRGQEYWKVLDGELEAAPGYPQSTARDWLVCGEPLADAEDVGPGPQGRSGAQDGLAVCSCTSDAHRLALPSLLLLTPLLWGL.

Disordered stretches follow at residues 1-22 (MGRR…PGPG) and 107-133 (PRCS…TKWS). The N-terminal stretch at 1-39 (MGRRPRGPGSPRGPGPPRPGPGLPPLLLVLALAAHGGCA) is a signal peptide. Residues 11–22 (PRGPGPPRPGPG) are compositionally biased toward pro residues. The propeptide occupies 40–124 (APAPRAEDLS…PPGAQSRRKR (85 aa)). The Cysteine switch signature appears at 107 to 114 (PRCSLPDL). C109 lines the Zn(2+) pocket. N-linked (GlcNAc...) asparagine glycosylation occurs at N136. H247 contacts Zn(2+). Residue E248 is part of the active site. H251 and H257 together coordinate Zn(2+). Residues 301-334 (PTAQLDTPEPEEPPLLPEPPNNRSSTPPQKDVPH) are disordered. The N-linked (GlcNAc...) asparagine glycan is linked to N322. 4 Hemopexin repeats span residues 333-382 (PHRC…WRGL), 386-432 (LDSV…SLPP), 436-479 (DAVF…WRGV), and 480-527 (PSML…WLVC). C336 and C527 are oxidised to a cystine. The GPI-anchor amidated serine moiety is linked to residue S558. Residues 559–578 (DAHRLALPSLLLLTPLLWGL) constitute a propeptide, removed in mature form.

Belongs to the peptidase M10A family. Zn(2+) is required as a cofactor. The cofactor is Ca(2+). Post-translationally, the precursor is cleaved by a furin endopeptidase. Expressed by monocytes and macrophages.

It is found in the cell membrane. It localises to the secreted. The protein resides in the extracellular space. Its subcellular location is the extracellular matrix. Endopeptidase that degrades various components of the extracellular matrix, such as fibrin. May be involved in the activation of membrane-bound precursors of growth factors or inflammatory mediators, such as tumor necrosis factor-alpha. May also be involved in tumoral process. Not obvious if able to proteolytically activate progelatinase A. Does not hydrolyze collagen types I, II, III, IV and V, gelatin, fibronectin, laminin, decorin nor alpha1-antitrypsin. This chain is Matrix metalloproteinase-17 (Mmp17), found in Mus musculus (Mouse).